The chain runs to 206 residues: Proteasome subunit beta 2 (206 aa).

Residues 1-10 (MLHLKEKLKG) constitute a propeptide, removed in mature form; by autocatalysis. The Nucleophile role is filled by T11.

The protein belongs to the peptidase T1B family. The 20S proteasome core is composed of 14 alpha and 14 beta subunits that assemble into four stacked heptameric rings, resulting in a barrel-shaped structure. The two inner rings, each composed of seven catalytic beta subunits, are sandwiched by two outer rings, each composed of seven alpha subunits. The catalytic chamber with the active sites is on the inside of the barrel. Has a gated structure, the ends of the cylinder being occluded by the N-termini of the alpha-subunits. Is capped at one or both ends by the proteasome regulatory ATPase, PAN.

It is found in the cytoplasm. It catalyses the reaction Cleavage of peptide bonds with very broad specificity.. With respect to regulation, the formation of the proteasomal ATPase PAN-20S proteasome complex, via the docking of the C-termini of PAN into the intersubunit pockets in the alpha-rings, triggers opening of the gate for substrate entry. Interconversion between the open-gate and close-gate conformations leads to a dynamic regulation of the 20S proteasome proteolysis activity. Its function is as follows. Component of the proteasome core, a large protease complex with broad specificity involved in protein degradation. This is Proteasome subunit beta 2 from Pyrococcus furiosus (strain ATCC 43587 / DSM 3638 / JCM 8422 / Vc1).